We begin with the raw amino-acid sequence, 267 residues long: Putative phosphatase bbp_030 (267 aa).

D8 functions as the Nucleophile in the catalytic mechanism. Residue D8 participates in Mg(2+) binding. L9 is a binding site for phosphate. Residue D10 coordinates Mg(2+). Phosphate contacts are provided by residues 42–43 (TG) and K191. D214 is a Mg(2+) binding site. A phosphate-binding site is contributed by N217.

The protein belongs to the HAD-like hydrolase superfamily. Cof family. The cofactor is Mg(2+).

This chain is Putative phosphatase bbp_030, found in Buchnera aphidicola subsp. Baizongia pistaciae (strain Bp).